The chain runs to 352 residues: Ion-translocating oxidoreductase complex subunit D (352 aa).

Helical transmembrane passes span 20 to 40, 42 to 62, 78 to 109, 123 to 143, and 148 to 168; these read IMLL…WFFG, GTLV…ALVL, ALLT…VIIA, PAMI…TSWL, and IAVN…GHTA. T187 carries the post-translational modification FMN phosphoryl threonine. A run of 5 helical transmembrane segments spans residues 214–234, 242–262, 267–287, 301–321, and 322–342; these read ILAG…GVWL, WHIP…GWLF, LAAP…FFIL, LIFG…GGYP, and DGVA…DYYT.

Belongs to the NqrB/RnfD family. In terms of assembly, the complex is composed of six subunits: RsxA, RsxB, RsxC, RsxD, RsxE and RsxG. The cofactor is FMN.

It localises to the cell inner membrane. Its function is as follows. Part of a membrane-bound complex that couples electron transfer with translocation of ions across the membrane. Required to maintain the reduced state of SoxR. In Escherichia coli O6:K15:H31 (strain 536 / UPEC), this protein is Ion-translocating oxidoreductase complex subunit D.